The sequence spans 361 residues: Phosphate acyltransferase (361 aa).

This sequence belongs to the PlsX family. Homodimer. Probably interacts with PlsY.

It is found in the cytoplasm. The enzyme catalyses a fatty acyl-[ACP] + phosphate = an acyl phosphate + holo-[ACP]. It participates in lipid metabolism; phospholipid metabolism. In terms of biological role, catalyzes the reversible formation of acyl-phosphate (acyl-PO(4)) from acyl-[acyl-carrier-protein] (acyl-ACP). This enzyme utilizes acyl-ACP as fatty acyl donor, but not acyl-CoA. The polypeptide is Phosphate acyltransferase (Parvibaculum lavamentivorans (strain DS-1 / DSM 13023 / NCIMB 13966)).